The following is a 245-amino-acid chain: 1-(5-phosphoribosyl)-5-[(5-phosphoribosylamino)methylideneamino] imidazole-4-carboxamide isomerase (245 aa).

The Proton acceptor role is filled by aspartate 7. The active-site Proton donor is aspartate 129.

The protein belongs to the HisA/HisF family.

It localises to the cytoplasm. It carries out the reaction 1-(5-phospho-beta-D-ribosyl)-5-[(5-phospho-beta-D-ribosylamino)methylideneamino]imidazole-4-carboxamide = 5-[(5-phospho-1-deoxy-D-ribulos-1-ylimino)methylamino]-1-(5-phospho-beta-D-ribosyl)imidazole-4-carboxamide. It participates in amino-acid biosynthesis; L-histidine biosynthesis; L-histidine from 5-phospho-alpha-D-ribose 1-diphosphate: step 4/9. The protein is 1-(5-phosphoribosyl)-5-[(5-phosphoribosylamino)methylideneamino] imidazole-4-carboxamide isomerase of Shewanella amazonensis (strain ATCC BAA-1098 / SB2B).